Reading from the N-terminus, the 178-residue chain is Major non-capsid protein (178 aa).

This sequence belongs to the tenuiviruses NCP family.

The protein resides in the host cytoplasm. Its function is as follows. Induces the formation of large intracellular inclusion body, organized in amorphous and crystalline arrays. Presumably the main cause of the stripe disease observed in host. This Rice stripe virus (isolate T) (RSV) protein is Major non-capsid protein.